A 402-amino-acid chain; its full sequence is uncharacterized protein (402 aa).

12 helical membrane passes run Ile23–Val43, Leu52–Leu72, Val90–Ile110, Leu121–Gly141, Trp158–Val178, Trp180–Leu200, Gly228–Tyr248, Ala255–Phe275, Leu282–Leu302, Trp309–Phe329, Leu351–Phe371, and Ser375–His395.

The protein belongs to the major facilitator superfamily. YhhS family.

It is found in the cell inner membrane. This is an uncharacterized protein from Pseudomonas aeruginosa (strain ATCC 15692 / DSM 22644 / CIP 104116 / JCM 14847 / LMG 12228 / 1C / PRS 101 / PAO1).